The following is a 231-amino-acid chain: Cytidylate kinase (231 aa).

Position 17–25 (17–25 (GPTASGKGT)) interacts with ATP.

Belongs to the cytidylate kinase family. Type 1 subfamily.

Its subcellular location is the cytoplasm. It carries out the reaction CMP + ATP = CDP + ADP. The catalysed reaction is dCMP + ATP = dCDP + ADP. This is Cytidylate kinase from Ralstonia pickettii (strain 12J).